The primary structure comprises 149 residues: MRIADNKKAIFNYHIEERFEAGMVLEGWEVKSVREGKVQLTDGYVVIRGGELFIIGCQINPLGTASTHVRPDSVRTKKLLMHKDEIRRLVGKVEQKGFTLVPLNMHWKAGKVKCEIGLAKGKGEHDKRDTIKDREGKREVERAMKSRSR.

Positions 121–149 (GKGEHDKRDTIKDREGKREVERAMKSRSR) are disordered.

This sequence belongs to the SmpB family.

The protein localises to the cytoplasm. In terms of biological role, required for rescue of stalled ribosomes mediated by trans-translation. Binds to transfer-messenger RNA (tmRNA), required for stable association of tmRNA with ribosomes. tmRNA and SmpB together mimic tRNA shape, replacing the anticodon stem-loop with SmpB. tmRNA is encoded by the ssrA gene; the 2 termini fold to resemble tRNA(Ala) and it encodes a 'tag peptide', a short internal open reading frame. During trans-translation Ala-aminoacylated tmRNA acts like a tRNA, entering the A-site of stalled ribosomes, displacing the stalled mRNA. The ribosome then switches to translate the ORF on the tmRNA; the nascent peptide is terminated with the 'tag peptide' encoded by the tmRNA and targeted for degradation. The ribosome is freed to recommence translation, which seems to be the essential function of trans-translation. This chain is SsrA-binding protein, found in Polaromonas sp. (strain JS666 / ATCC BAA-500).